Consider the following 211-residue polypeptide: Outer-membrane lipoprotein carrier protein (211 aa).

The N-terminal stretch at 1–24 is a signal peptide; the sequence is MRNRILVSACAALAMFAMQAPAHA.

The protein belongs to the LolA family. Monomer.

The protein resides in the periplasm. Participates in the translocation of lipoproteins from the inner membrane to the outer membrane. Only forms a complex with a lipoprotein if the residue after the N-terminal Cys is not an aspartate (The Asp acts as a targeting signal to indicate that the lipoprotein should stay in the inner membrane). The sequence is that of Outer-membrane lipoprotein carrier protein from Cupriavidus taiwanensis (strain DSM 17343 / BCRC 17206 / CCUG 44338 / CIP 107171 / LMG 19424 / R1) (Ralstonia taiwanensis (strain LMG 19424)).